Reading from the N-terminus, the 369-residue chain is Anhydro-N-acetylmuramic acid kinase (369 aa).

An ATP-binding site is contributed by 12–19 (GTSMDGVD).

The protein belongs to the anhydro-N-acetylmuramic acid kinase family.

It catalyses the reaction 1,6-anhydro-N-acetyl-beta-muramate + ATP + H2O = N-acetyl-D-muramate 6-phosphate + ADP + H(+). It participates in amino-sugar metabolism; 1,6-anhydro-N-acetylmuramate degradation. The protein operates within cell wall biogenesis; peptidoglycan recycling. Functionally, catalyzes the specific phosphorylation of 1,6-anhydro-N-acetylmuramic acid (anhMurNAc) with the simultaneous cleavage of the 1,6-anhydro ring, generating MurNAc-6-P. Is required for the utilization of anhMurNAc either imported from the medium or derived from its own cell wall murein, and thus plays a role in cell wall recycling. The sequence is that of Anhydro-N-acetylmuramic acid kinase from Shewanella pealeana (strain ATCC 700345 / ANG-SQ1).